Reading from the N-terminus, the 479-residue chain is Protein TRIGALACTOSYLDIACYLGLYCEROL 4, chloroplastic (479 aa).

At Val-288 to Gly-310 the chain is embedded in the membrane.

As to quaternary structure, homodimer. Forms dimeric beta-barrel. Interacts with TGD5.

Its subcellular location is the plastid. It localises to the chloroplast outer membrane. The protein localises to the endoplasmic reticulum. In terms of biological role, involved in lipid transfer from the endoplasmic reticulum (ER) to plastids. Specifically binds phosphatidic acid (PtdOH). The polypeptide is Protein TRIGALACTOSYLDIACYLGLYCEROL 4, chloroplastic (Arabidopsis thaliana (Mouse-ear cress)).